We begin with the raw amino-acid sequence, 164 residues long: FMN reductase (NADH) RutF (164 aa).

This sequence belongs to the non-flavoprotein flavin reductase family. RutF subfamily.

It catalyses the reaction FMNH2 + NAD(+) = FMN + NADH + 2 H(+). Its function is as follows. Catalyzes the reduction of FMN to FMNH2 which is used to reduce pyrimidine by RutA via the Rut pathway. The polypeptide is FMN reductase (NADH) RutF (Escherichia coli O45:K1 (strain S88 / ExPEC)).